The primary structure comprises 398 residues: Acetate kinase 2 (398 aa).

Position 7 (asparagine 7) interacts with Mg(2+). Residue lysine 14 coordinates ATP. Arginine 91 contributes to the substrate binding site. Aspartate 148 functions as the Proton donor/acceptor in the catalytic mechanism. ATP-binding positions include 208 to 212 (HLGNG), 283 to 285 (DFR), and 331 to 335 (GVGEN). Mg(2+) is bound at residue glutamate 384.

Belongs to the acetokinase family. As to quaternary structure, homodimer. Mg(2+) is required as a cofactor. It depends on Mn(2+) as a cofactor.

It localises to the cytoplasm. It catalyses the reaction acetate + ATP = acetyl phosphate + ADP. Its pathway is metabolic intermediate biosynthesis; acetyl-CoA biosynthesis; acetyl-CoA from acetate: step 1/2. In terms of biological role, catalyzes the formation of acetyl phosphate from acetate and ATP. Can also catalyze the reverse reaction. This Clostridium perfringens (strain 13 / Type A) protein is Acetate kinase 2.